Reading from the N-terminus, the 2037-residue chain is MSTHRPFQLTHGSIEHTLLVPNDLFFNYSQLKDEFIKTLPEPTEGFAGDDEPSSPAELYGKFIGFISNAQFPQIVELSLKDFESRFLDNNNDNIHSFAVKLLDDETYPTTIAKVKENIVKNYYKAVKSINKVESNLLYHCKHDAKLVAIFGGQGNTDDYFEELRELYTLYQGLIEDLLVSIAEKLNQLHPSFDKIYTQGLNILSWLKHPETTPDQDYLLSVPVSCPVICVIQLCHYTITCKVLGLTPGEFRNSLKWSTGHSQGLVTAVTIAASDSWDSFLKNSLTAVSLLLFIGSRCLSTYPRTSLPPTMLQDSLDNGEGRPSPMLSVRDLSIKQVEKFIEQTNSHLPREKHIAISLINGARNLVLSGPPESLYGFNLNLRNQKAPMGLDQSRVPFSERKLKCSNRFLPIFAPFHSHLLADATELILDDVKEHGLSFEGLKIPVYDTFDGSDFQALKEPIIDRVVKLITELPVHWEEATNHKATHILDFGPGGVSGLGVLTHRNKEGTGARIILAGTLDSNPIDDEYGFKHEIFQTSADKAIKWAPDWLKELRPTLVKNSEGKIYVKTKFSQLLGRAPLMVAGMTPTTVNTDIVSASLNAGYHIELAGGGYFSPVMMTRAIDDIVSRIKPGYGLGINLIYVNPFMLQWGIPLIKDLREKGYPIQSLTIGAGVPSIEVATEYIEDLGLTHLGLKPGSVDAISQVIAIAKAHPTFPIVLQWTGGRGGGHHSFEDFHQPIIQMYSKIRRCSNIVLVAGSGFGSDEDTYPYLSGYWSEKFNYPPMPFDGVLFGSRVMTSKESHTSLAAKKLIVECKGVPDQQWEQTYKKPTGGIITVRSEMGEPIHKIATRGVMFWKELDDTIFNLPKNKLLDALNKKRDHIIKKLNNDFQKPWFGKNANGVCDLQEMTYKEVANRLVELMYVKKSHRWIDVSLRNMYGDFLRRVEERFTSSAGTVSLLQNFNQLNEPEQFTADFFEKFPQAGKQLISEEDCDYFLMLAARPGQKPVPFVPVLDERFEFFFKKDSLWQSEDLESVVDEDVQRTCILHGPVASQYTSKVDEPIGDILNSIHEGHIARLIKEEYAGDESKIPVVEYFGGKKPASVSATSVNIIDGNQVVYEIDSELPNKQEWLDLLAGTELNWLQAFISTDRIVQGSKHVSNPLHDILTPAKHSKVTIDKKTKKLTAFENIKGDLLPVVEIELVKPNTIQLSLIEHRTADTNPVALPFLYKYNPADGFAPILEIMEDRNERIKEFYWKLWFGSSVPYSNDINVEKAILGDEITISSQTISEFTHAIGNKCDAFVDRPGKATLAPMDFAIVIGWKAIIKAIFPKSVDGDLLKLVHLSNGYKMITGAAPLKKGDVVSTKAEIKAVLNQPSGKLVEVVGTIYREGKPVMEVTSQFLYRGEYNDYCNTFQKVTETPVQVAFKSAKDLAVLRSKEWFHLEKDVQFDVLTFRCESTYKFKSANVYSSIKTTGQVLLELPTKEVIQVGSVDYEAGTSYGNPVTDYLSRNGKTIEESVIFENAIPLSSGEELTSKAPGTNEPYAIVSGDYNPIHVSRVFAAYAKLPGTITHGMYSSASIRALVEEWAANNVAARVRAFKCDFVGMVLPNDTLQTTMEHVGMINGRKIIKVETRNVETELPVLIGEAEIEQPTTTYVFTGQGSQEQGMGMELYNSSEVAREVWDKADRHFVNNYGFSILDIVQNNPNELTIHFGGAKGRAIRDNYIGMMFETIGEDGALKSEKIFKDIDETTTSYTFVSPTGLLSATQFTQPALTLMEKAAYEDIKSKGLIPSDIMFAGHSLGEYSALSSLANVMPIESLVDVVFYRGMTMQVAVPRDELGRSNYGMVAVNPSRVSATFDDSALRFVVDEVANKTKWLLEIVNYNVENQQYVAAGDLRALDTLTNVLNVLKINKIDIVKLQEQMSIEKVKEHLYEIVDEVAAKSLAKPQPIDLERGFAVIPLKGISVPFHSSYLMSGVKPFQRFLCKKIPKSSVKPQDLIGKYIPNLTAKPFELTKEYFQSVYDLTKSEKIKSILDNWEQYE.

Residues 1-453 (MSTHRPFQLT…VYDTFDGSDF (453 aa)) are acetyltransferase. Ser261 serves as the catalytic For acetyltransferase activity. Residues 465-798 (VKLITELPVH…GSRVMTSKES (334 aa)) form an enoyl reductase region. Residues 1132-1612 (GTELNWLQAF…LPNDTLQTTM (481 aa)) are dehydratase. A MaoC-like domain is found at 1506–1634 (NGKTIEESVI…KVETRNVETE (129 aa)). The malonyl/palmitoyl transferase stretch occupies residues 1613–1833 (EHVGMINGRK…MTMQVAVPRD (221 aa)). Ser1796 serves as the catalytic For malonyltransferase activity.

Belongs to the fungal fatty acid synthetase subunit beta family. As to quaternary structure, [Alpha(6)beta(6)] hexamers of two multifunctional subunits (alpha and beta).

It carries out the reaction acetyl-CoA + n malonyl-CoA + 2n NADPH + 4n H(+) = a long-chain-acyl-CoA + n CoA + n CO2 + 2n NADP(+).. It catalyses the reaction holo-[ACP] + acetyl-CoA = acetyl-[ACP] + CoA. The catalysed reaction is holo-[ACP] + malonyl-CoA = malonyl-[ACP] + CoA. The enzyme catalyses a (3R)-hydroxyacyl-[ACP] = a (2E)-enoyl-[ACP] + H2O. It carries out the reaction a 2,3-saturated acyl-[ACP] + NAD(+) = a (2E)-enoyl-[ACP] + NADH + H(+). It catalyses the reaction (9Z)-octadecenoyl-[ACP] + H2O = (9Z)-octadecenoate + holo-[ACP] + H(+). Fatty acid synthetase catalyzes the formation of long-chain fatty acids from acetyl-CoA, malonyl-CoA and NADPH. The beta subunit contains domains for: [acyl-carrier-protein] acetyltransferase and malonyltransferase, S-acyl fatty acid synthase thioesterase, enoyl-[acyl-carrier-protein] reductase, and 3-hydroxypalmitoyl-[acyl-carrier-protein] dehydratase. The polypeptide is Fatty acid synthase subunit beta (FAS1) (Candida albicans (Yeast)).